Reading from the N-terminus, the 137-residue chain is Probable leaf thionin (137 aa).

Residues 1–28 (MATNKSIKSVVICVLILGLVLEQVQVEG) form the signal peptide. Cystine bridges form between C31-C68, C32-C60, C40-C58, and C44-C54. Positions 75 to 137 (LNLLPESGEP…DGDVIQSVEA (63 aa)) are cleaved as a propeptide — acidic domain.

It belongs to the plant thionin (TC 1.C.44) family. 4 C-C subfamily.

Its subcellular location is the secreted. Its function is as follows. Thionins are small plant proteins which are toxic to animal cells. They seem to exert their toxic effect at the level of the cell membrane. Their precise function is not known. This chain is Probable leaf thionin, found in Hordeum vulgare (Barley).